A 371-amino-acid chain; its full sequence is Queuine tRNA-ribosyltransferase (371 aa).

Asp90 functions as the Proton acceptor in the catalytic mechanism. Substrate contacts are provided by residues 90 to 94 (DSGGF), Asp144, Gln189, and Gly215. An RNA binding region spans residues 246 to 252 (GVGTPEN). The active-site Nucleophile is Asp265. An RNA binding; important for wobble base 34 recognition region spans residues 270-274 (TRNAR). Positions 303, 305, 308, and 334 each coordinate Zn(2+).

Belongs to the queuine tRNA-ribosyltransferase family. As to quaternary structure, homodimer. Within each dimer, one monomer is responsible for RNA recognition and catalysis, while the other monomer binds to the replacement base PreQ1. It depends on Zn(2+) as a cofactor.

The enzyme catalyses 7-aminomethyl-7-carbaguanine + guanosine(34) in tRNA = 7-aminomethyl-7-carbaguanosine(34) in tRNA + guanine. The protein operates within tRNA modification; tRNA-queuosine biosynthesis. Catalyzes the base-exchange of a guanine (G) residue with the queuine precursor 7-aminomethyl-7-deazaguanine (PreQ1) at position 34 (anticodon wobble position) in tRNAs with GU(N) anticodons (tRNA-Asp, -Asn, -His and -Tyr). Catalysis occurs through a double-displacement mechanism. The nucleophile active site attacks the C1' of nucleotide 34 to detach the guanine base from the RNA, forming a covalent enzyme-RNA intermediate. The proton acceptor active site deprotonates the incoming PreQ1, allowing a nucleophilic attack on the C1' of the ribose to form the product. After dissociation, two additional enzymatic reactions on the tRNA convert PreQ1 to queuine (Q), resulting in the hypermodified nucleoside queuosine (7-(((4,5-cis-dihydroxy-2-cyclopenten-1-yl)amino)methyl)-7-deazaguanosine). The polypeptide is Queuine tRNA-ribosyltransferase (Helicobacter acinonychis (strain Sheeba)).